Reading from the N-terminus, the 155-residue chain is Cytochrome c oxidase subunit 4, mitochondrial (155 aa).

Residues 1 to 25 (MLSLRQSIRFFKPATRTLCSSRYLL) constitute a mitochondrion transit peptide. The residue at position 55 (threonine 55) is a Phosphothreonine. Zn(2+) contacts are provided by cysteine 111, histidine 119, cysteine 134, and cysteine 137.

Belongs to the cytochrome c oxidase subunit 5B family. Component of the cytochrome c oxidase (complex IV, CIV), a multisubunit enzyme composed of 12 subunits. The complex is composed of a catalytic core of 3 subunits COX1, COX2 and COX3, encoded in the mitochondrial DNA, and 9 supernumerary subunits COX4, COX5A (or COX5B), COX6, COX7, COX8, COX9, COX12, COX13 and COX26, which are encoded in the nuclear genome. The complex exists as a monomer or a dimer and forms supercomplexes (SCs) in the inner mitochondrial membrane with a dimer of ubiquinol-cytochrome c oxidoreductase (cytochrome b-c1 complex, complex III, CIII), resulting in 2 different assemblies (supercomplexes III(2)IV and III(2)IV(2)).

Its subcellular location is the mitochondrion inner membrane. The protein operates within energy metabolism; oxidative phosphorylation. Component of the cytochrome c oxidase, the last enzyme in the mitochondrial electron transport chain which drives oxidative phosphorylation. The respiratory chain contains 3 multisubunit complexes succinate dehydrogenase (complex II, CII), ubiquinol-cytochrome c oxidoreductase (cytochrome b-c1 complex, complex III, CIII) and cytochrome c oxidase (complex IV, CIV), that cooperate to transfer electrons derived from NADH and succinate to molecular oxygen, creating an electrochemical gradient over the inner membrane that drives transmembrane transport and the ATP synthase. Cytochrome c oxidase is the component of the respiratory chain that catalyzes the reduction of oxygen to water. Electrons originating from reduced cytochrome c in the intermembrane space (IMS) are transferred via the dinuclear copper A center (CU(A)) of COX2 and heme A of COX1 to the active site in COX1, a binuclear center (BNC) formed by heme A3 and copper B (CU(B)). The BNC reduces molecular oxygen to 2 water molecules using 4 electrons from cytochrome c in the IMS and 4 protons from the mitochondrial matrix. This Saccharomyces cerevisiae (strain ATCC 204508 / S288c) (Baker's yeast) protein is Cytochrome c oxidase subunit 4, mitochondrial (COX4).